The chain runs to 133 residues: 14 kDa fatty acid-binding protein (133 aa).

(5Z,8Z,11Z,14Z)-eicosatetraenoate is bound by residues R107 and 127–129 (RNY). (9Z)-octadecenoate-binding positions include R107 and 127–129 (RNY).

Belongs to the calycin superfamily. Fatty-acid binding protein (FABP) family. As to expression, tubercles, muscle layers and body.

The protein resides in the cytoplasm. In terms of biological role, may play a role in the transport of fatty acids. Binds various fatty acids, such as arachidonic, oleic, palmitic and linolenic acid (in vitro). The chain is 14 kDa fatty acid-binding protein from Schistosoma mansoni (Blood fluke).